The sequence spans 523 residues: Nondiscriminating glutamyl-tRNA synthetase EARS2, mitochondrial (523 aa).

The transit peptide at 1 to 41 directs the protein to the mitochondrion; it reads MAALLRRLLQRERPSAASGRPVGRREANLGTDAGVAVRVRF. 40–42 serves as a coordination point for L-glutamate; the sequence is RFA. The 'HIGH' region signature appears at 45-53; the sequence is PTGFLHLGG. Residue His-50 coordinates ATP. L-glutamate-binding positions include Glu-76, 228-232, and Arg-246; that span reads YHLAC. Glu-249 is a binding site for ATP. The residue at position 256 (Lys-256) is an N6-succinyllysine. 284–288 contributes to the ATP binding site; it reads KLSKR. The short motif at 284–288 is the 'KMSKS' region element; sequence KLSKR. Lys-486 carries the N6-acetyllysine modification.

Belongs to the class-I aminoacyl-tRNA synthetase family. Glutamate--tRNA ligase type 1 subfamily.

It is found in the mitochondrion matrix. The catalysed reaction is tRNA(Glx) + L-glutamate + ATP = L-glutamyl-tRNA(Glx) + AMP + diphosphate. The enzyme catalyses tRNA(Glu) + L-glutamate + ATP = L-glutamyl-tRNA(Glu) + AMP + diphosphate. It catalyses the reaction tRNA(Gln) + L-glutamate + ATP = L-glutamyl-tRNA(Gln) + AMP + diphosphate. Non-discriminating glutamyl-tRNA synthetase that catalyzes aminoacylation of both mitochondrial tRNA(Glu) and tRNA(Gln) and participates in RNA aminoacylation for mitochondrial protein translation. Attachs glutamate to tRNA(Glu) or tRNA(Gln) in a two-step reaction: glutamate is first activated by ATP to form Glu-AMP and then transferred to the acceptor end of tRNA(Glu) or tRNA(Gln). In vitro, cytoplasmic tRNA(Gln) is slightly glutamylated, but with low activity. The chain is Nondiscriminating glutamyl-tRNA synthetase EARS2, mitochondrial from Homo sapiens (Human).